The chain runs to 93 residues: Cell division protein CrgA (93 aa).

A run of 2 helical transmembrane segments spans residues valine 31–phenylalanine 51 and leucine 70–methionine 90.

The protein belongs to the CrgA family.

Its subcellular location is the cell membrane. Its function is as follows. Involved in cell division. This is Cell division protein CrgA from Mycobacterium avium (strain 104).